The sequence spans 187 residues: MILASGSPRRRDLLANLGVPFRVVVSGEAEDRPERDPARLAGELATLKARAVAQSHPDAVVIAADTVVALGEELLGKPADEAENWAFVRRLAGRTHQVYTGVTVLSGGQESGGVERTDVTFRALTDGEIAHYARTGEGLDKAGGYGIQGVGMALVARIDGDYSNVVGFPLTLVIRLLRGAGVAVWGE.

Catalysis depends on Asp-65, which acts as the Proton acceptor.

The protein belongs to the Maf family. YhdE subfamily. A divalent metal cation is required as a cofactor.

It localises to the cytoplasm. The catalysed reaction is dTTP + H2O = dTMP + diphosphate + H(+). It catalyses the reaction UTP + H2O = UMP + diphosphate + H(+). In terms of biological role, nucleoside triphosphate pyrophosphatase that hydrolyzes dTTP and UTP. May have a dual role in cell division arrest and in preventing the incorporation of modified nucleotides into cellular nucleic acids. This Deinococcus geothermalis (strain DSM 11300 / CIP 105573 / AG-3a) protein is dTTP/UTP pyrophosphatase.